Reading from the N-terminus, the 371-residue chain is Hsc70-interacting protein (371 aa).

Residues 38–80 (MGGKVPPATHKAKSEENTKEEKRDKTTEENIKTEELSSEESDL) form a disordered region. Positions 49 to 72 (AKSEENTKEEKRDKTTEENIKTEE) are enriched in basic and acidic residues. TPR repeat units follow at residues 113 to 146 (ANEK…NPRL), 147 to 180 (AILY…NPDS), and 181 to 214 (AQPY…DYDE). Residues 255–271 (KAREEHERAQREEEARR) are compositionally biased toward basic and acidic residues. Positions 255–296 (KAREEHERAQREEEARRQSGSQYGSFPGGFPGGMPGNFPGGM) are disordered. Over residues 280–296 (FPGGFPGGMPGNFPGGM) the composition is skewed to gly residues. One can recognise an STI1 domain in the interval 321-360 (DPEVLAAMQDPEVMVAFQDVAQNPSNMSKYQSNPKVMNLI). Position 348 is a phosphoserine; by GRK5 (Ser348). N6-acetyllysine is present on residues Lys355 and Lys362.

It belongs to the FAM10 family. Homotetramer. Interacts with HSC70 as well as DNAJ homologs and HSP90. Interacts (via the C-terminus 302- 318 AA) with GRK5.

Its subcellular location is the cytoplasm. Functionally, one HIP oligomer binds the ATPase domains of at least two HSC70 molecules dependent on activation of the HSC70 ATPase by HSP40. Stabilizes the ADP state of HSC70 that has a high affinity for substrate protein. Through its own chaperone activity, it may contribute to the interaction of HSC70 with various target proteins. This Mus musculus (Mouse) protein is Hsc70-interacting protein (St13).